Consider the following 97-residue polypeptide: Citrate lyase acyl carrier protein (97 aa).

Ser14 bears the O-(phosphoribosyl dephospho-coenzyme A)serine mark.

The protein belongs to the CitD family. As to quaternary structure, oligomer with a subunit composition of (alpha,beta,gamma)6.

The protein localises to the cytoplasm. Functionally, covalent carrier of the coenzyme of citrate lyase. The polypeptide is Citrate lyase acyl carrier protein (Lactobacillus helveticus (strain DPC 4571)).